A 146-amino-acid polypeptide reads, in one-letter code: Hemoglobin subunit beta (146 aa).

The Globin domain occupies Gln2–His146. Heme b-binding residues include His63 and His92.

Belongs to the globin family. As to quaternary structure, heterotetramer of two alpha chains and two beta chains. Red blood cells.

Functionally, involved in oxygen transport from the lung to the various peripheral tissues. The protein is Hemoglobin subunit beta (HBB) of Accipiter gentilis (Northern goshawk).